A 306-amino-acid polypeptide reads, in one-letter code: Mitochondrial glycine transporter (306 aa).

Solcar repeat units follow at residues 25–114, 121–205, and 217–301; these read QPVI…LKQY, PTAL…TKNV, and LVPV…MMAK. The next 6 membrane-spanning stretches (helical) occupy residues 31-56, 89-115, 127-152, 180-203, 221-247, and 276-294; these read FLCGSISGTCSTVLFQPLDLLKTRLQ, GMSPSIVRCVPGVGIYFGTLYSLKQYF, VILGAGSRSVAGVCMSPITVIKTRYE, GLTATLLRDAPFSGIYLMFYSQTK, VNFSCGIFAGILASLVTQPADVIKTHM, and GSVPRALRRTLVAAMAWTV.

The protein belongs to the mitochondrial carrier (TC 2.A.29) family. SLC25A38 subfamily.

It is found in the mitochondrion inner membrane. The enzyme catalyses glycine(in) = glycine(out). Its function is as follows. Mitochondrial glycine transporter that imports glycine into the mitochondrial matrix. Plays an important role in providing glycine for the first enzymatic step in heme biosynthesis, the condensation of glycine with succinyl-CoA to produce 5-aminolevulinate (ALA) in the mitochondrial matrix. Required during erythropoiesis. Plays a role as pro-apoptotic protein that induces caspase-dependent apoptosis. This chain is Mitochondrial glycine transporter, found in Ovis aries (Sheep).